Reading from the N-terminus, the 217-residue chain is Putative cobalt transport protein CbiM (217 aa).

Transmembrane regions (helical) follow at residues 8 to 28 (LPPEWAAFWYVFAIPFLVYGA), 44 to 64 (LIAVSAGFIFVLSALKLPSVT), 74 to 94 (GIAVVFFGPAVTALLSAIVLL), 107 to 127 (TLGANTASMGVIGPFVGWIAF), 139 to 161 (VFAAAMLSDLVTYVVTSLQLALA), and 181 to 201 (IFAVTQVPLSIIEGVVAVMLV).

It belongs to the CbiM family. Forms an energy-coupling factor (ECF) transporter complex composed of an ATP-binding protein (A component, CbiO), a transmembrane protein (T component, CbiQ) and 2 possible substrate-capture proteins (S components, CbiM and CbiN) of unknown stoichimetry.

It is found in the cell membrane. It functions in the pathway cofactor biosynthesis; adenosylcobalamin biosynthesis. In terms of biological role, part of the energy-coupling factor (ECF) transporter complex CbiMNOQ involved in cobalt import. In Archaeoglobus fulgidus (strain ATCC 49558 / DSM 4304 / JCM 9628 / NBRC 100126 / VC-16), this protein is Putative cobalt transport protein CbiM.